The sequence spans 311 residues: Ribose-phosphate pyrophosphokinase (311 aa).

Residues 37 to 39 and 96 to 97 contribute to the ATP site; these read DGE and RQ. Residues His130 and Asp170 each contribute to the Mg(2+) site. Lys193 is an active-site residue. D-ribose 5-phosphate contacts are provided by residues Arg195, Asp219, and 223 to 227; that span reads DTAGT.

It belongs to the ribose-phosphate pyrophosphokinase family. Class I subfamily. As to quaternary structure, homohexamer. Requires Mg(2+) as cofactor.

It is found in the cytoplasm. It catalyses the reaction D-ribose 5-phosphate + ATP = 5-phospho-alpha-D-ribose 1-diphosphate + AMP + H(+). It functions in the pathway metabolic intermediate biosynthesis; 5-phospho-alpha-D-ribose 1-diphosphate biosynthesis; 5-phospho-alpha-D-ribose 1-diphosphate from D-ribose 5-phosphate (route I): step 1/1. Its function is as follows. Involved in the biosynthesis of the central metabolite phospho-alpha-D-ribosyl-1-pyrophosphate (PRPP) via the transfer of pyrophosphoryl group from ATP to 1-hydroxyl of ribose-5-phosphate (Rib-5-P). In Aquifex aeolicus (strain VF5), this protein is Ribose-phosphate pyrophosphokinase.